A 341-amino-acid chain; its full sequence is Methionine import ATP-binding protein MetN 1 (341 aa).

Residues 2–241 (IEFRQVSKSF…PKTTIAQNFV (240 aa)) form the ABC transporter domain. 38–45 (GYSGAGKS) provides a ligand contact to ATP.

Belongs to the ABC transporter superfamily. Methionine importer (TC 3.A.1.24) family. The complex is composed of two ATP-binding proteins (MetN), two transmembrane proteins (MetI) and a solute-binding protein (MetQ).

The protein resides in the cell membrane. It catalyses the reaction L-methionine(out) + ATP + H2O = L-methionine(in) + ADP + phosphate + H(+). It carries out the reaction D-methionine(out) + ATP + H2O = D-methionine(in) + ADP + phosphate + H(+). In terms of biological role, part of the ABC transporter complex MetNIQ involved in methionine import. Responsible for energy coupling to the transport system. This Staphylococcus aureus (strain Mu50 / ATCC 700699) protein is Methionine import ATP-binding protein MetN 1.